Reading from the N-terminus, the 588-residue chain is 2-(3-amino-3-carboxypropyl)histidine synthase subunit 2 (588 aa).

C149, C170, and C402 together coordinate [4Fe-4S] cluster. Disordered stretches follow at residues 454 to 485 (DERNKQEINDGSDNNEEDSDDEAPEFNPVTGQ) and 546 to 588 (GLGS…TKFQ). The segment covering 466-477 (DNNEEDSDDEAP) has biased composition (acidic residues). A compositionally biased stretch (basic and acidic residues) spans 579 to 588 (YDYDRETKFQ).

It belongs to the DPH1/DPH2 family. DPH2 subfamily. Component of the 2-(3-amino-3-carboxypropyl)histidine synthase complex composed of DPH1, DPH2, DPH3 and a NADH-dependent reductase, predominantly CBR1. It depends on [4Fe-4S] cluster as a cofactor.

It localises to the cytoplasm. Its pathway is protein modification; peptidyl-diphthamide biosynthesis. Required for the first step of diphthamide biosynthesis, a post-translational modification of histidine which occurs in elongation factor 2. DPH1 and DPH2 transfer a 3-amino-3-carboxypropyl (ACP) group from S-adenosyl-L-methionine (SAM) to a histidine residue, the reaction is assisted by a reduction system comprising DPH3 and a NADH-dependent reductase, predominantly CBR1. Facilitates the reduction of the catalytic iron-sulfur cluster found in the DPH1 subunit. The chain is 2-(3-amino-3-carboxypropyl)histidine synthase subunit 2 (DPH2) from Debaryomyces hansenii (strain ATCC 36239 / CBS 767 / BCRC 21394 / JCM 1990 / NBRC 0083 / IGC 2968) (Yeast).